A 31-amino-acid polypeptide reads, in one-letter code: Cliotide T10 (31 aa).

A cross-link (cyclopeptide (Gly-Asn)) is located at residues 1–31 (GIPCGESCVYIPCTVTALLGCSCKDKVCYKN). Disulfide bonds link C4–C21, C8–C23, and C13–C28.

In terms of processing, contains 3 disulfide bonds. This is a cyclic peptide. Expressed in seed, root and nodule but not in flower, stem, shoot, leaf and pod (at protein level).

In terms of biological role, probably participates in a plant defense mechanism. The protein is Cliotide T10 of Clitoria ternatea (Butterfly pea).